The primary structure comprises 336 residues: Major histocompatibility complex class I-related protein 1 (336 aa).

The first 18 residues, 1-18 (MMLLLPLIIVLMMKLSDA), serve as a signal peptide directing secretion. Positions 19-105 (RTHSLRYFRL…KQLQHHYNHS (87 aa)) are alpha-1. Positions 19–197 (RTHSLRYFRL…EYGKDALQRT (179 aa)) are antigen-binding cleft. The Extracellular portion of the chain corresponds to 19-298 (RTHSLRYFRL…QESETILLVV (280 aa)). Residues Tyr25 and Arg27 each contribute to the 8-(9H-purin-6-yl)-2-oxa-8-azabicyclo[3.3.1]nona-3,6-diene-4,6-dicarbaldehyde site. 5-(2-oxoethylideneamino)-6-(D-ribitylamino)uracil-binding residues include Arg27, Ser42, and Lys61. Residues Arg27, Ser42, and Lys61 each contribute to the 5-(2-oxopropylideneamino)-6-(D-ribitylamino)uracil site. 7-hydroxy-6-methyl-8-(1-D-ribityl)lumazine contacts are provided by Arg27, Ser42, and Lys61. 8-(9H-purin-6-yl)-2-oxa-8-azabicyclo[3.3.1]nona-3,6-diene-4,6-dicarbaldehyde is bound by residues Lys61 and His76. Position 61 (Lys61) interacts with 2-amino-4-oxopteridine-6-carbaldehyde. Lys61 contacts pyridoxal. N-linked (GlcNAc...) asparagine glycosylation is present at Asn103. The tract at residues 106–197 (GFHTYQRMIG…EYGKDALQRT (92 aa)) is alpha-2. Arg112 serves as a coordination point for 8-(9H-purin-6-yl)-2-oxa-8-azabicyclo[3.3.1]nona-3,6-diene-4,6-dicarbaldehyde. Residues Arg112, Tyr170, and Gln171 each coordinate 5-(2-oxoethylideneamino)-6-(D-ribitylamino)uracil. 5-(2-oxopropylideneamino)-6-(D-ribitylamino)uracil contacts are provided by Arg112, Tyr170, and Gln171. 3 residues coordinate 7-hydroxy-6-methyl-8-(1-D-ribityl)lumazine: Arg112, Tyr170, and Gln171. 2 cysteine pairs are disulfide-bonded: Cys116-Cys179 and Cys218-Cys274. Positions 198 to 289 (EPPKVRVNHK…GVHMVLQGFQ (92 aa)) are alpha-3. In terms of domain architecture, Ig-like C1-type spans 200–295 (PKVRVNHKET…QGFQESETIL (96 aa)). The interval 290 to 298 (ESETILLVV) is connecting peptide. A helical membrane pass occupies residues 299–319 (KAVGFIVLAIALAGVGILAWR). Topologically, residues 320-336 (KRPRGKNKVICLSTPEH) are cytoplasmic.

The protein belongs to the MHC class I family. Heterotrimer that consists of MR1, B2M and metabolite antigen. Major classes of metabolite ligands presented by MR1 include riboflavin-related antigens, pyrimidines and ribityl lumazines, nucleobase adducts and folate derivatives. Forms reversible covalent Schiff base complexes with microbial pyrimidine-based metabolite, which serves as a molecular switch triggering complete folding, stable association with B2M and translocation of the ternary complex from endoplasmic reticulum to the plasma membrane. Alternatively, forms non-Schiff base complexes with ribityl lumazines. On antigen-presenting cells, the ternary complex interacts with TCR on MR1-restricted T cells. Interacts with TAPBP and TAPBPL chaperones in the endoplasmic reticulum. TAPBP associated or not with MHC class I peptide loading complex binds ligand-free MR1 or MR1-B2M complex, providing for stable MR1 pools ready for metabolite antigen processing. TAPBPL interacts with MR1 in a ligand-independent way; this interaction may stabilize MR1 pool and facilitate ligand loading and dissociation. Structurally, MR1-B2M heterodimer adopts a topology similar to classical MHC class I molecules, with alpha-1 and alpha-2 domains of MR1 forming the antigen-binding cleft composed of two alpha-helices resting on a floor of 7-stranded anti-parallel beta-pleated sheet. MR1-B2M heterodimer (via alpha-helices) interacts with TCR (via CDR domains). N-glycosylated.

The protein resides in the cell membrane. The protein localises to the endoplasmic reticulum membrane. It localises to the golgi apparatus membrane. Its subcellular location is the early endosome membrane. It is found in the late endosome membrane. In terms of biological role, antigen-presenting molecule specialized in displaying microbial pyrimidine-based metabolites to alpha-beta T cell receptors (TCR) on innate-type mucosal-associated invariant T (MAIT) cells. In complex with B2M preferentially presents riboflavin-derived metabolites to semi-invariant TCRs on MAIT cells, guiding immune surveillance of the microbial metabolome at mucosal epithelial barriers. Signature pyrimidine-based microbial antigens are generated via non-enzymatic condensation of metabolite intermediates of the riboflavin pathway with by-products arising from other metabolic pathways such as glycolysis. Typical potent antigenic metabolites are 5-(2-oxoethylideneamino)-6-D-ribitylaminouracil (5-OE-RU) and 5-(2-oxopropylideneamino)-6-D-ribitylaminouracil (5-OP-RU), products of condensation of 5-amino-6-D-ribityaminouracil (5-A-RU) with glyoxal or methylglyoxal by-products, respectively. May present microbial antigens to various MAIT cell subsets, providing for unique recognition of diverse microbes, including pathogens that do not synthesize riboflavin. Upon antigen recognition, elicits rapid innate-type MAIT cell activation to eliminate pathogenic microbes by directly killing infected cells. During T cell development, drives thymic selection and post-thymic terminal differentiation of MAIT cells in a process dependent on commensal microflora. Acts as an immune sensor of cancer cell metabolome. May present a tumor-specific or -associated metabolite essential for cancer cell survival to a pan-cancer TCR on a non-MAIT CD8-positive T cell clone, triggering T cell-mediated killing of a wide range of cancer cell types. May present tumor-enriched pyridoxal and pyridoxal 5'-phosphate antigens, enabling preferential recognition of cancer cells. Presents nucleobase carbonyl adducts generated during oxidative stress. Captures M3Ade, a nucleobase adduct composed of one adenine modified by a malondialdehyde trimer, for recognition by MR1-restricted T cell clones expressing a polyclonal TCR repertoire. The sequence is that of Major histocompatibility complex class I-related protein 1 from Bos taurus (Bovine).